Consider the following 457-residue polypeptide: BAG family molecular chaperone regulator 4 (457 aa).

Low complexity predominate over residues M1–Y20. Residues M1–W104 form a disordered region. S7 is modified (phosphoserine). Pro residues predominate over residues H31 to P48. Omega-N-methylarginine is present on residues R41, R54, R108, and R185. Disordered stretches follow at residues L128 to L335 and Y348 to E374. Positions Y160–C193 are enriched in polar residues. Positions P255–S268 are enriched in low complexity. Residues P284–P295 are compositionally biased toward pro residues. Polar residues-rich tracts occupy residues A326–L335 and Y348–L365. The 78-residue stretch at S379 to G456 folds into the BAG domain.

In terms of assembly, binds to the ATPase domain of HSP/HSC70 chaperones. Binds to the death domain of TNFRSF12. Binds to the death domain of TNFRSF1A in the absence of TNF and thereby prevents binding of adapter molecules such as TRADD or TRAF2. Interacts with PRKN.

It is found in the cytoplasm. Inhibits the chaperone activity of HSP70/HSC70 by promoting substrate release. Prevents constitutive TNFRSF1A signaling. Negative regulator of PRKN translocation to damaged mitochondria. The chain is BAG family molecular chaperone regulator 4 (Bag4) from Mus musculus (Mouse).